The primary structure comprises 443 residues: MPPSTGSVPPAASTPAAGDEATAAGRVLLGRYELGGLLGRGASAKVYLARDLLTGRDVAIKSFPNPRHGGGLRGGEEDVLLRPAPIEREAAILPRLRHRHVMRLREILATRKKVHFVLDLAAGGELFSLLDASGRMTEDLARHYFRQLISAVRYCHSRGVYHRDIKPENLLLDDAGDLKVADFGLGAVADGALHHTLCGTPAYVAPEILSRKGYNPAKVDIWSCGVVLFVLAAGYLPFNDASLVNMYRKIYAGKFRCPAWFSPELRCLVRRILDPNPATRIDTEEIITHPWFRQDASHFAMAQLMQHGHDEEAKFKTEFKEDDMARDMTAFDILACSPGSDLSGLFGAEPGKERVFVGEPAAAVLSRVEEAGKKEGYMVTREGKKGTGPVYVKGENGGIVAKVCVFKIADAVSVVEVVKGYGAEAARFWKARLEPAMKPPAAI.

Residues 32–292 (YELGGLLGRG…TEEIITHPWF (261 aa)) enclose the Protein kinase domain. Residues 38-46 (LGRGASAKV) and K61 each bind ATP. The active-site Proton acceptor is D164. The activation loop stretch occupies residues 182-207 (DFGLGAVADGALHHTLCGTPAYVAPE). The 35-residue stretch at 313–347 (AKFKTEFKEDDMARDMTAFDILACSPGSDLSGLFG) folds into the NAF domain. A PPI region spans residues 350–379 (PGKERVFVGEPAAAVLSRVEEAGKKEGYMV).

Belongs to the protein kinase superfamily. CAMK Ser/Thr protein kinase family. SNF1 subfamily. It depends on Mn(2+) as a cofactor.

It carries out the reaction L-seryl-[protein] + ATP = O-phospho-L-seryl-[protein] + ADP + H(+). It catalyses the reaction L-threonyl-[protein] + ATP = O-phospho-L-threonyl-[protein] + ADP + H(+). CIPK serine-threonine protein kinases interact with CBL proteins. Binding of a CBL protein to the regulatory NAF domain of CIPK protein lead to the activation of the kinase in a calcium-dependent manner. The protein is CBL-interacting protein kinase 29 (CIPK29) of Oryza sativa subsp. japonica (Rice).